The following is a 185-amino-acid chain: Peptidyl-tRNA hydrolase (185 aa).

Tyr-14 lines the tRNA pocket. The Proton acceptor role is filled by His-19. TRNA contacts are provided by Tyr-65, Asn-67, and Asn-113.

This sequence belongs to the PTH family. Monomer.

The protein localises to the cytoplasm. The enzyme catalyses an N-acyl-L-alpha-aminoacyl-tRNA + H2O = an N-acyl-L-amino acid + a tRNA + H(+). Its function is as follows. Hydrolyzes ribosome-free peptidyl-tRNAs (with 1 or more amino acids incorporated), which drop off the ribosome during protein synthesis, or as a result of ribosome stalling. In terms of biological role, catalyzes the release of premature peptidyl moieties from peptidyl-tRNA molecules trapped in stalled 50S ribosomal subunits, and thus maintains levels of free tRNAs and 50S ribosomes. The sequence is that of Peptidyl-tRNA hydrolase from Rickettsia africae (strain ESF-5).